The sequence spans 2325 residues: Centriolin (2325 aa).

Positions 1-33 (MKKGSQQKIFSKAKIPSSSHSPIPSSMSNMRSR) are disordered. The segment covering 16–33 (PSSSHSPIPSSMSNMRSR) has biased composition (low complexity). LRR repeat units follow at residues 126-147 (KLEVLNLSYNLIGKIEKLDKLL), 148-169 (KLRELNLSYNKISKIEGIENMC), 170-191 (NLQKLNLAGNEIEHIPVWLGKK), and 194-215 (SLRVLNLKGNKISSLQDISKLK). An LRRCT domain is found at 228 to 266 (NPVVTLPHYLQFTIFHLRSLESLEGQPVTTQDRQEAFER). Coiled-coil stretches lie at residues 267–343 (FSLE…IELT) and 435–799 (LDTQ…LNHV). Residue S831 is modified to Phosphoserine. Positions 851–1101 (LARSKWERDE…ARLQNVLDLT (251 aa)) form a coiled coil. The interval 1150–1241 (PSSKVSSHSS…DQEEPPFVPP (92 aa)) is disordered. Over residues 1224 to 1235 (SQEESELDDQEE) the composition is skewed to acidic residues. The stretch at 1317-2255 (EHHNLENEVS…DRLKAQLRHC (939 aa)) forms a coiled coil. Phosphoserine is present on S1475. Positions 1948–2118 (MMFQRLQKER…ELVAQDNHER (171 aa)) are required for centrosome localization. Residues 1985 to 2325 (QKSKLDQVLS…QNQEKNASAR (341 aa)) form a sufficient for interaction with HOOK2 region. Positions 2288–2325 (VTSTSADSASSPSLSQLESSLTEDSQLGQNQEKNASAR) are disordered. A compositionally biased stretch (low complexity) spans 2290–2314 (STSADSASSPSLSQLESSLTEDSQL). Polar residues predominate over residues 2315–2325 (GQNQEKNASAR).

In terms of assembly, interacts with HOOK2. Interacts with EXOC6 and SNAPIN. Associates with the exocyst complex. As to expression, widely expressed with highest levels in testis and trachea.

The protein resides in the cytoplasm. The protein localises to the cytoskeleton. It is found in the microtubule organizing center. Its subcellular location is the centrosome. It localises to the midbody. The protein resides in the midbody ring. Functionally, involved in cell cycle progression and cytokinesis. During the late steps of cytokinesis, anchors exocyst and SNARE complexes at the midbody, thereby allowing secretory vesicle-mediated abscission. The chain is Centriolin (CNTRL) from Homo sapiens (Human).